The chain runs to 158 residues: Ribosome maturation factor RimP (158 aa).

The protein belongs to the RimP family.

It is found in the cytoplasm. Functionally, required for maturation of 30S ribosomal subunits. The polypeptide is Ribosome maturation factor RimP (Pseudomonas fluorescens (strain Pf0-1)).